The primary structure comprises 503 residues: U6 snRNA (guanine-N(2))-methyltransferase THUMPD2 (503 aa).

Positions 161 to 266 constitute a THUMP domain; the sequence is CQLEKQIKEE…DIYSVVGIPV (106 aa).

It belongs to the methyltransferase superfamily. Part of the heterodimeric THUMPD2-TRM112 methyltransferase complex; this complex forms an active tRNA methyltransferase, where TRMT112 acts as an activator of the catalytic subunit THUMPD2. As to expression, expressed in a variety of tissues including brain, colon, gingiva, heart, kidney, liver, lung, placenta, small intestine, spleen and thymus.

It is found in the nucleus. The catalysed reaction is guanosine in U6 snRNA + S-adenosyl-L-methionine = N(2)-methylguanosine in U6 snRNA + S-adenosyl-L-homocysteine + H(+). Catalytic subunit of the THUMPD2-TRM112 methyltransferase complex, that specifically mediates the S-adenosyl-L-methionine-dependent N(2)-methylation of guanosine nucleotides, most probably at position 72 (m2G72), in the U6snRNA of the major spliceosome. This modification in the U6 snRNA affects the constitutive splicing efficiency of introns that have suboptimal splice sites and can impact final mRNA levels. The polypeptide is U6 snRNA (guanine-N(2))-methyltransferase THUMPD2 (Homo sapiens (Human)).